The primary structure comprises 552 residues: MSDIALTVSMLSLVAVLGLWIGNWRIYGVGLGIGGVLFGGIIVGHFAQRYQLDLNSDMLHFIQEFGLILFVYSIGIQVGPGFFSSLRVSGLRLNAFAVLMVLISGLITAAIHKLFAVPLPIILGIFSGAVTNTPALGAGQQILTDLGSNPSQIDLMGMGYAMAYPFGICGILLVIWLIRLLFRINIDAEARDFDSRNGHSHELLQTMNIMVRNPNLSGLSIQEVPILNSDTIVCSRLKRGDFLMVPLPTTQIESGDLLHLVGQKQELENARLVIGEQVDTSLSTRGTELQVSRVVVTNERVLGKKIRDLNLKQRYDVVISRLNRAGVELVAGNNATLQFGDILNLVGRPQAIDAVAAIVGNAQQKLQQVQMLPVFIGIGLGVLLGSVPLFIPGFPAALKLGLAGGPLVVALILGRIGSIGKLYWFMPPSANLALRELGIVLFLAVVGLKSGGNFIDTLLNGEGVTWIGYGILITAIPLLTAALLARLMIKMNYLTLCGMLAGAMTDPPALAFANGLHATSGAAALSYATVYPLAMFLRIMSPQLLALLFWSV.

A run of 5 helical transmembrane segments spans residues 4 to 24 (IALT…IGNW), 26 to 46 (IYGV…VGHF), 65 to 85 (FGLI…FFSS), 90 to 112 (GLRL…AAIH), and 158 to 178 (MGYA…IWLI). RCK C-terminal domains are found at residues 191-276 (RDFD…VIGE) and 279-361 (DTSL…IVGN). 6 helical membrane passes run 371–391 (MLPV…PLFI), 403–425 (AGGP…LYWF), 439–459 (IVLF…DTLL), 464–484 (VTWI…AALL), 493–513 (YLTL…LAFA), and 530–550 (VYPL…LLFW).

It belongs to the AAE transporter (TC 2.A.81) family. YidE subfamily.

It localises to the cell membrane. The sequence is that of Putative transport protein NT01EI_3867 from Edwardsiella ictaluri (strain 93-146).